We begin with the raw amino-acid sequence, 185 residues long: MENTQENPTDQTTEETGREAQAAEPAAQAAENAAPAAEAALAEAQAKIAELQESFLRAKAETENVRRRAQDDVAKAHKFAIEGFAENLLPVLDSLEAAVGDTSGDLAKVREGVELTLRQLTSALEKGRVAALNPVGEKFDPHLHQAISMVPADQEPNTVVAVLQKGYTIADRVLRPALVTVAQPK.

The span at 1–11 (MENTQENPTDQ) shows a compositional bias: polar residues. The segment at 1-38 (MENTQENPTDQTTEETGREAQAAEPAAQAAENAAPAAE) is disordered. Over residues 19-38 (EAQAAEPAAQAAENAAPAAE) the composition is skewed to low complexity.

This sequence belongs to the GrpE family. In terms of assembly, homodimer.

It localises to the cytoplasm. Participates actively in the response to hyperosmotic and heat shock by preventing the aggregation of stress-denatured proteins, in association with DnaK and GrpE. It is the nucleotide exchange factor for DnaK and may function as a thermosensor. Unfolded proteins bind initially to DnaJ; upon interaction with the DnaJ-bound protein, DnaK hydrolyzes its bound ATP, resulting in the formation of a stable complex. GrpE releases ADP from DnaK; ATP binding to DnaK triggers the release of the substrate protein, thus completing the reaction cycle. Several rounds of ATP-dependent interactions between DnaJ, DnaK and GrpE are required for fully efficient folding. In Burkholderia mallei (strain NCTC 10247), this protein is Protein GrpE.